Consider the following 246-residue polypeptide: 3-deoxy-manno-octulosonate cytidylyltransferase (246 aa).

It belongs to the KdsB family.

The protein localises to the cytoplasm. It carries out the reaction 3-deoxy-alpha-D-manno-oct-2-ulosonate + CTP = CMP-3-deoxy-beta-D-manno-octulosonate + diphosphate. It participates in nucleotide-sugar biosynthesis; CMP-3-deoxy-D-manno-octulosonate biosynthesis; CMP-3-deoxy-D-manno-octulosonate from 3-deoxy-D-manno-octulosonate and CTP: step 1/1. It functions in the pathway bacterial outer membrane biogenesis; lipopolysaccharide biosynthesis. Activates KDO (a required 8-carbon sugar) for incorporation into bacterial lipopolysaccharide in Gram-negative bacteria. The polypeptide is 3-deoxy-manno-octulosonate cytidylyltransferase (Myxococcus xanthus (strain DK1622)).